A 283-amino-acid chain; its full sequence is Elongation factor Ts (283 aa).

An involved in Mg(2+) ion dislocation from EF-Tu region spans residues 79–82 (TDFV).

This sequence belongs to the EF-Ts family.

It localises to the cytoplasm. Associates with the EF-Tu.GDP complex and induces the exchange of GDP to GTP. It remains bound to the aminoacyl-tRNA.EF-Tu.GTP complex up to the GTP hydrolysis stage on the ribosome. The sequence is that of Elongation factor Ts from Shewanella putrefaciens (strain CN-32 / ATCC BAA-453).